We begin with the raw amino-acid sequence, 528 residues long: G protein-coupled receptor 161 (528 aa).

Over 1-30 the chain is Extracellular; the sequence is MSLNSSLGHRKELSNLTEGASDQGGSGVTE. Residues Asn-4 and Asn-15 are each glycosylated (N-linked (GlcNAc...) asparagine). Residues 31–51 traverse the membrane as a helical segment; the sequence is FVAIVIITVFVCLGNLVIVIT. Residues 52–64 lie on the Cytoplasmic side of the membrane; sequence LYRKSYLLTLSNK. Residues 65 to 85 traverse the membrane as a helical segment; that stretch reads FVFSLTLSNFLLSVLVLPFVV. At 86–101 the chain is on the extracellular side; sequence TSSIRREWIFGVVWCN. A disulfide bond links Cys-100 and Cys-178. A glycan (N-linked (GlcNAc...) asparagine) is linked at Asn-101. Residues 102 to 122 form a helical membrane-spanning segment; sequence FSALLYLLISSASMLTLGIIA. The Cytoplasmic segment spans residues 123–143; that stretch reads VDRYYAVLYPMAYPMKITGNR. A helical transmembrane segment spans residues 144–164; that stretch reads AVMVLAYIWLHSLIGCLPPLF. The Extracellular portion of the chain corresponds to 165–190; that stretch reads GWSSVEFDEFKWMCVAAWHREPGYTA. Residues 191–211 traverse the membrane as a helical segment; sequence FWQIWCALLPFLVMLVCYGFI. Topologically, residues 212–269 are cytoplasmic; sequence FRVARVKARKVHCGAVVTVEVGVQRTGRKNSSTSTSSSGSRKSAFQGVVYSANQCKAL. The chain crosses the membrane as a helical span at residues 270–290; sequence VTILVVIGAFMVTWGPYMVVI. At 291–306 the chain is on the extracellular side; sequence TSEALWGKNCVSPTLE. Residues 307–327 traverse the membrane as a helical segment; that stretch reads TWATWLSFTSAICHPLIYGLW. Over 328–528 the chain is Cytoplasmic; the sequence is NKTVRKELLG…EGDVLATEQR (201 aa).

It belongs to the G-protein coupled receptor 1 family.

Its subcellular location is the cell projection. The protein resides in the cilium membrane. It is found in the cell membrane. Its function is as follows. Key negative regulator of Shh signaling, which promotes the processing of GLI3 into GLI3R during neural tube development. Recruited by TULP3 and the IFT-A complex to primary cilia and acts as a regulator of the PKA-dependent basal repression machinery in Shh signaling by increasing cAMP levels, leading to promote the PKA-dependent processing of GLI3 into GLI3R and repress the Shh signaling. In presence of SHH, it is removed from primary cilia and is internalized into recycling endosomes, preventing its activity and allowing activation of the Shh signaling. Its ligand is unknown. The polypeptide is G protein-coupled receptor 161 (GPR161) (Bos taurus (Bovine)).